We begin with the raw amino-acid sequence, 248 residues long: Putative transposase YncI (248 aa).

This sequence belongs to the transposase 11 family.

This Escherichia coli (strain K12) protein is Putative transposase YncI (yncI).